The primary structure comprises 249 residues: Eukaryotic translation initiation factor 6 (249 aa).

This sequence belongs to the eIF-6 family. In terms of assembly, monomer. Associates with the 60S ribosomal subunit.

It is found in the cytoplasm. The protein resides in the nucleus. Its subcellular location is the nucleolus. Functionally, binds to the 60S ribosomal subunit and prevents its association with the 40S ribosomal subunit to form the 80S initiation complex in the cytoplasm. May also be involved in ribosome biogenesis. This Babesia bovis protein is Eukaryotic translation initiation factor 6.